The chain runs to 754 residues: Nibrin (754 aa).

In terms of domain architecture, FHA spans 24–83 (YVVGRKNCAILIEKDQSISRNHAVLTANFSVTNLSQTDEIPVLALKDNSKYGTFVNEEKM). 2 consecutive BRCT domains span residues 105 to 181 (KFRI…TEFL) and 224 to 315 (GKTF…LAVI). A mediates interaction with SP100 region spans residues 111 to 328 (EPLVACSSCL…TKNYCDPQGH (218 aa)). The interaction with MTOR, MAPKAP1 and RICTOR stretch occupies residues 221-402 (IFKGKTFIFL…FRMLSQDAPT (182 aa)). Phosphoserine; by ATM is present on Ser278. The tract at residues 326–346 (QGHPSTGLKTTTPGPSLSQGL) is disordered. Residues 328–346 (HPSTGLKTTTPGPSLSQGL) are compositionally biased toward polar residues. The residue at position 337 (Thr337) is a Phosphothreonine. Ser343 carries the post-translational modification Phosphoserine; by ATM. At Ser347 the chain carries Phosphoserine. N6-lactoyllysine is present on Lys388. Disordered stretches follow at residues 396 to 415 (LSQD…NNNS) and 431 to 475 (LSPT…NQEM). Position 397 is a phosphoserine (Ser397). A Phosphothreonine modification is found at Thr402. Polar residues-rich tracts occupy residues 431–440 (LSPTKLPSIN) and 447–462 (SQQQ…FQPS). Ser432 carries the post-translational modification Phosphoserine. Residue Lys435 forms a Glycyl lysine isopeptide (Lys-Gly) (interchain with G-Cter in ubiquitin) linkage. Residues 461–467 (PSTKKRE) carry the Nuclear localization signal motif. A phosphoserine mark is found at Ser509 and Ser518. Glycyl lysine isopeptide (Lys-Gly) (interchain with G-Cter in SUMO2) cross-links involve residues Lys571 and Lys582. Phosphoserine occurs at positions 615 and 673. Glycyl lysine isopeptide (Lys-Gly) (interchain with G-Cter in ubiquitin) cross-links involve residues Lys686, Lys690, and Lys735. The FxF/Y motif signature appears at 740–749 (ADDLFRYNPY).

This sequence belongs to the Nibrin family. In terms of assembly, component of the MRN complex composed of two heterodimers RAD50 and MRE11 associated with a single NBN. The MRN complexes dimerize on DNA to form joined MRN-MRN oligomers required for DNA double-strand break repair. The MRN complexes dimerize on DNA to form joined MRN-MRN oligomers required for DNA double-strand break repair. As part of the MRN complex, interacts with MCM9; the interaction recruits the complex to DNA repair sites. Component of the BASC complex, at least composed of BRCA1, MSH2, MSH6, MLH1, ATM, BLM, RAD50, MRE11 and NBN. Interacts with histone H2AX; this requires phosphorylation of H2AX on 'Ser-139' and promotes NBN recruitment to DNA damage sites. Interacts with (phosphorylated) MDC1; promoting NBN recruitment to DNA damage sites. Interacts with (phosphorylated) RAD17; promoting NBN recruitment to DNA damage sites. Interacts (via FxF/Y motif) with ATM. Interacts with HJURP. Interacts with INTS3. Interacts with KPNA2. Interacts with TERF2; interaction is disrupted upon NBN phosphorylation by CDK2. Interacts with (phosphorylated) RBBP8/CtIP; the interaction links the role of the MRN complex in DNA double-strand break sensing to resection. Interacts with SP100; recruits NBN to PML bodies. Interacts with ATF2. Interacts with MTOR, MAPKAP1 isoform 2 and RICTOR; indicative for an association with the mTORC2 complex. Interacts with MRNIP. Interacts with UFL1; promoting UFL1 recruitment to double-strand breaks following DNA damage. Interacts with CYREN (via XLF motif). Phosphorylated by ATM in response of ionizing radiation, and such phosphorylation is responsible intra-S phase checkpoint control and telomere maintenance. Phosphorylated at Ser-432 by CDK2 in S/G2 phases abolishes interaction with TERF2, enabling DCLRE1B/Apollo recruitment to telomeres. Phosphorylation at Ser-432 in response to dysfunctional telomeres promotes non-homologous end joining repair at telomeres, while dephosphorylation by PPP1CA promotes microhomology-mediated end-joining (MMEJ) repair. Post-translationally, ubiquitinated at Lys-435 via 'Lys-6'-linked ubiquitin chains by RNF8, promoting NBN recruitment to DNA double-strand breaks (DSBs). Ubiquitinated at Lys-686 and Lys-689 via 'Lys-63'-linked ubiquitin chains by PELI1: ubiquitination takes place following PELI1 phosphorylation and promotes ATM activation and DNA repair. Ubiquitinated at Lys-735 via 'Lys-63'-linked ubiquitin chains by the SCF(SKP2) complex: ubiquitination takes place following SKP2 phosphorylation and promotes ATM activation and DNA repair. In terms of processing, lactylation at Lys-388 by KAT5 in response to DNA damage promotes recruitment of the MRN complex to DNA damage sites. Delactylated by HDAC3.

It localises to the nucleus. It is found in the chromosome. The protein resides in the PML body. Its subcellular location is the telomere. Component of the MRN complex, which plays a central role in double-strand break (DSB) repair, DNA recombination, maintenance of telomere integrity and meiosis. The MRN complex is involved in the repair of DNA double-strand breaks (DSBs) via homologous recombination (HR), an error-free mechanism which primarily occurs during S and G2 phases. The complex (1) mediates the end resection of damaged DNA, which generates proper single-stranded DNA, a key initial steps in HR, and is (2) required for the recruitment of other repair factors and efficient activation of ATM and ATR upon DNA damage. The MRN complex possesses single-strand endonuclease activity and double-strand-specific 3'-5' exonuclease activity, which are provided by MRE11, to initiate end resection, which is required for single-strand invasion and recombination. Within the MRN complex, NBN acts as a protein-protein adapter, which specifically recognizes and binds phosphorylated proteins, promoting their recruitment to DNA damage sites. Recruits MRE11 and RAD50 components of the MRN complex to DSBs in response to DNA damage. Promotes the recruitment of PI3/PI4-kinase family members ATM, ATR, and probably DNA-PKcs to the DNA damage sites, activating their functions. Mediates the recruitment of phosphorylated RBBP8/CtIP to DSBs, leading to cooperation between the MRN complex and RBBP8/CtIP to initiate end resection. RBBP8/CtIP specifically promotes the endonuclease activity of the MRN complex to clear DNA ends containing protein adducts. The MRN complex is also required for the processing of R-loops. NBN also functions in telomere length maintenance via its interaction with TERF2: interaction with TERF2 during G1 phase preventing recruitment of DCLRE1B/Apollo to telomeres. NBN also promotes DNA repair choice at dysfunctional telomeres: NBN phosphorylation by CK2 promotes non-homologous end joining repair at telomeres, while unphosphorylated NBN promotes microhomology-mediated end-joining (MMEJ) repair. Enhances AKT1 phosphorylation possibly by association with the mTORC2 complex. This chain is Nibrin (NBN), found in Pongo abelii (Sumatran orangutan).